Here is a 414-residue protein sequence, read N- to C-terminus: Enolase (414 aa).

Residue Q162 participates in (2R)-2-phosphoglycerate binding. Catalysis depends on E204, which acts as the Proton donor. Residues D239, E280, and D307 each coordinate Mg(2+). The (2R)-2-phosphoglycerate site is built by K332, R361, S362, and K383. Catalysis depends on K332, which acts as the Proton acceptor.

It belongs to the enolase family. The cofactor is Mg(2+).

The protein resides in the cytoplasm. It is found in the secreted. It localises to the cell surface. The catalysed reaction is (2R)-2-phosphoglycerate = phosphoenolpyruvate + H2O. Its pathway is carbohydrate degradation; glycolysis; pyruvate from D-glyceraldehyde 3-phosphate: step 4/5. Catalyzes the reversible conversion of 2-phosphoglycerate (2-PG) into phosphoenolpyruvate (PEP). It is essential for the degradation of carbohydrates via glycolysis. This is Enolase from Campylobacter lari (strain RM2100 / D67 / ATCC BAA-1060).